A 458-amino-acid polypeptide reads, in one-letter code: Phosphomethylpyrimidine synthase (458 aa).

Residues N80, M109, Y139, H175, 195–197, 236–239, and E275 each bind substrate; these read SRG and DSLR. H279 is a Zn(2+) binding site. Y302 provides a ligand contact to substrate. H343 lines the Zn(2+) pocket. 3 residues coordinate [4Fe-4S] cluster: C423, C426, and C431.

This sequence belongs to the ThiC family. Requires [4Fe-4S] cluster as cofactor.

The catalysed reaction is 5-amino-1-(5-phospho-beta-D-ribosyl)imidazole + S-adenosyl-L-methionine = 4-amino-2-methyl-5-(phosphooxymethyl)pyrimidine + CO + 5'-deoxyadenosine + formate + L-methionine + 3 H(+). It functions in the pathway cofactor biosynthesis; thiamine diphosphate biosynthesis. Its function is as follows. Catalyzes the synthesis of the hydroxymethylpyrimidine phosphate (HMP-P) moiety of thiamine from aminoimidazole ribotide (AIR) in a radical S-adenosyl-L-methionine (SAM)-dependent reaction. This Cyanothece sp. (strain PCC 7425 / ATCC 29141) protein is Phosphomethylpyrimidine synthase.